The chain runs to 476 residues: Glutamate--tRNA ligase (476 aa).

The 'HIGH' region signature appears at 9 to 19; that stretch reads PSPTGTLHIGT. Residues 248–252 carry the 'KMSKS' region motif; sequence KLSKR. Residue K251 participates in ATP binding.

Belongs to the class-I aminoacyl-tRNA synthetase family. Glutamate--tRNA ligase type 1 subfamily. As to quaternary structure, monomer.

Its subcellular location is the cytoplasm. The enzyme catalyses tRNA(Glu) + L-glutamate + ATP = L-glutamyl-tRNA(Glu) + AMP + diphosphate. Its function is as follows. Catalyzes the attachment of glutamate to tRNA(Glu) in a two-step reaction: glutamate is first activated by ATP to form Glu-AMP and then transferred to the acceptor end of tRNA(Glu). The chain is Glutamate--tRNA ligase from Synechococcus sp. (strain CC9311).